We begin with the raw amino-acid sequence, 134 residues long: Peroxisomal testis-specific protein 1 (134 aa).

The short motif at 131–134 (NHLL) is the Microbody targeting signal element.

Its subcellular location is the peroxisome. The chain is Peroxisomal testis-specific protein 1 (PXT1) from Homo sapiens (Human).